Here is a 246-residue protein sequence, read N- to C-terminus: Heavy metal-associated isoprenylated plant protein 8 (246 aa).

The interval 1-31 (MGKNKQNGESDNKSEKKNQKNGDSSVDKSDK) is disordered. The HMA 1 domain occupies 35–99 (CKEIVLKVYM…RVQKKFSRNA (65 aa)). A metal cation contacts are provided by C46 and C49. The tract at residues 96-122 (SRNAEMISPKHNPKQDQKEPQQKKESA) is disordered. The segment covering 108 to 122 (PKQDQKEPQQKKESA) has biased composition (basic and acidic residues). The 65-residue stretch at 125–189 (IKTAILRMNM…IKKKLGKHAE (65 aa)) folds into the HMA 2 domain. A metal cation contacts are provided by C136 and C139. The disordered stretch occupies residues 191-226 (LSQITEKGKDNNKKNNNKKEESDGNKIFSYPPQYSS). The segment covering 196–214 (EKGKDNNKKNNNKKEESDG) has biased composition (basic and acidic residues). At C243 the chain carries Cysteine methyl ester. A lipid anchor (S-farnesyl cysteine) is attached at C243. Positions 244–246 (SIM) are cleaved as a propeptide — removed in mature form.

Belongs to the HIPP family.

Functionally, heavy-metal-binding protein. The polypeptide is Heavy metal-associated isoprenylated plant protein 8 (Arabidopsis thaliana (Mouse-ear cress)).